The following is a 185-amino-acid chain: Adenine phosphoribosyltransferase (185 aa).

It belongs to the purine/pyrimidine phosphoribosyltransferase family. As to quaternary structure, homodimer.

The protein localises to the cytoplasm. It catalyses the reaction AMP + diphosphate = 5-phospho-alpha-D-ribose 1-diphosphate + adenine. It functions in the pathway purine metabolism; AMP biosynthesis via salvage pathway; AMP from adenine: step 1/1. In terms of biological role, catalyzes a salvage reaction resulting in the formation of AMP, that is energically less costly than de novo synthesis. The sequence is that of Adenine phosphoribosyltransferase from Kineococcus radiotolerans (strain ATCC BAA-149 / DSM 14245 / SRS30216).